A 463-amino-acid chain; its full sequence is Ammonium transporter 1 (463 aa).

Residues 1–39 lie on the Extracellular side of the membrane; the sequence is MVAGEIIKGVAAEITNGSSSSVVQKYLDCANQVAPDPGN. The helical transmembrane segment at 40–60 threads the bilayer; it reads TTWVLLSTILVLGMMPALAFF. The Cytoplasmic portion of the chain corresponds to 61–76; it reads EAGLLRSKNTLSIITQ. The chain crosses the membrane as a helical span at residues 77-97; it reads IMSGIVVLTVMWQAFGYSLTF. At 98–127 the chain is on the extracellular side; that stretch reads GPDQKGIIGNLDHAFLINVSYDDCSPNAPN. The chain crosses the membrane as a helical span at residues 128 to 148; the sequence is IPAAAYAFFMMMFANITPLLM. The Cytoplasmic segment spans residues 149–160; sequence TGAFAERVKFKA. Residues 161–181 traverse the membrane as a helical segment; that stretch reads FIALTVAWEIIVFYPVAHWIW. The Extracellular segment spans residues 182–194; sequence GGGWLHKYFGVLD. The helical transmembrane segment at 195-215 threads the bilayer; it reads FAGGIVIHTSAGVSALVIALY. Residues 216-233 lie on the Cytoplasmic side of the membrane; sequence VGRRKDFEKYGGEFPPSN. Residues 234–254 form a helical membrane-spanning segment; sequence LPLATIGAALLWMGWFGFNAG. Residues 255–265 are Extracellular-facing; the sequence is SALAAGNIATS. The helical transmembrane segment at 266 to 286 threads the bilayer; it reads AVASTQIGGSFSAIVWIILSA. Residues 287–293 are Cytoplasmic-facing; that stretch reads AKGKPNT. A helical transmembrane segment spans residues 294-314; the sequence is VSVINGVIAGLAGITPASGYI. Over 315 to 316 the chain is Extracellular; sequence NS. Residues 317–337 traverse the membrane as a helical segment; that stretch reads QYSIGLGICLGLASYYSVVLL. Residues 338 to 351 lie on the Cytoplasmic side of the membrane; that stretch reads KHKLHIDDALDVSS. A helical membrane pass occupies residues 352–372; the sequence is VHGLTGIIGSLAIGFCAELSV. The Extracellular portion of the chain corresponds to 373-392; it reads NPNGANGAFYGNPKLIGTQL. A helical membrane pass occupies residues 393-413; the sequence is LGVVSVAVWAAAWTWVLLKII. At 414–463 the chain is on the cytoplasmic side; that stretch reads DATIGVKIDESEEELGLDLVEHGEFAYHNISLQGNENHYSSVINSHDFFK.

This sequence belongs to the ammonia transporter channel (TC 1.A.11.2) family.

The protein localises to the cell membrane. Its subcellular location is the endosome membrane. It localises to the lysosome membrane. It is found in the cytoplasmic vesicle. The protein resides in the phagosome membrane. Ammonium transporter that mediates the excretion of ammonium. Controls ammonium homeostasis during growth and development. Ammonium has been shown to function as a morphogen at multiple steps during the development. This chain is Ammonium transporter 1 (amtA), found in Dictyostelium discoideum (Social amoeba).